We begin with the raw amino-acid sequence, 156 residues long: SsrA-binding protein (156 aa).

The protein belongs to the SmpB family.

The protein resides in the cytoplasm. Its function is as follows. Required for rescue of stalled ribosomes mediated by trans-translation. Binds to transfer-messenger RNA (tmRNA), required for stable association of tmRNA with ribosomes. tmRNA and SmpB together mimic tRNA shape, replacing the anticodon stem-loop with SmpB. tmRNA is encoded by the ssrA gene; the 2 termini fold to resemble tRNA(Ala) and it encodes a 'tag peptide', a short internal open reading frame. During trans-translation Ala-aminoacylated tmRNA acts like a tRNA, entering the A-site of stalled ribosomes, displacing the stalled mRNA. The ribosome then switches to translate the ORF on the tmRNA; the nascent peptide is terminated with the 'tag peptide' encoded by the tmRNA and targeted for degradation. The ribosome is freed to recommence translation, which seems to be the essential function of trans-translation. The chain is SsrA-binding protein from Renibacterium salmoninarum (strain ATCC 33209 / DSM 20767 / JCM 11484 / NBRC 15589 / NCIMB 2235).